The chain runs to 160 residues: Probable NADH dehydrogenase [ubiquinone] 1 beta subcomplex subunit 2, mitochondrial (160 aa).

The protein belongs to the complex I NDUFB2 subunit family. In terms of assembly, complex I is composed of 45 different subunits.

Its subcellular location is the mitochondrion inner membrane. Its function is as follows. Accessory subunit of the mitochondrial membrane respiratory chain NADH dehydrogenase (Complex I), that is believed not to be involved in catalysis. Complex I functions in the transfer of electrons from NADH to the respiratory chain. The immediate electron acceptor for the enzyme is believed to be ubiquinone. This is Probable NADH dehydrogenase [ubiquinone] 1 beta subcomplex subunit 2, mitochondrial from Caenorhabditis elegans.